A 90-amino-acid polypeptide reads, in one-letter code: Acylphosphatase (90 aa).

The 88-residue stretch at 3–90 (RYSAIVQGRV…DGEKKFSIKY (88 aa)) folds into the Acylphosphatase-like domain. Residues Arg-18 and Asn-36 contribute to the active site.

It belongs to the acylphosphatase family.

The catalysed reaction is an acyl phosphate + H2O = a carboxylate + phosphate + H(+). This is Acylphosphatase (acyP) from Clostridium beijerinckii (strain ATCC 51743 / NCIMB 8052) (Clostridium acetobutylicum).